A 325-amino-acid chain; its full sequence is MATIRELRDRIRSVNSTKKITKAQELIATSRITKAQGRVAAAAPYAEEIQRVLERLASASSLDHPMLREREGGKRAAVLVVTSDRGMAGGYNHNVLKKAAELEKLLAESGYEVVRYVTGKKGVDYYKFRAEDVAGTWTGFSQDPDWAATHNVRRHLIDGFTASSEGEAAWREGLNLPEGQDIQGFDQVHVVYTEFISMLTQNPVVHQLLPVEPVIEDEIFEKGEDLLSSSGEVEPDYEFEPDADTLLEALLPQYVSRRLFSIFLEAAAAESASRRNAMKSATDNATELVKDLSRVANQARQAQITQEITEIVGGAGALADSGESD.

It belongs to the ATPase gamma chain family. As to quaternary structure, F-type ATPases have 2 components, CF(1) - the catalytic core - and CF(0) - the membrane proton channel. CF(1) has five subunits: alpha(3), beta(3), gamma(1), delta(1), epsilon(1). CF(0) has three main subunits: a, b and c.

It is found in the cell membrane. Its function is as follows. Produces ATP from ADP in the presence of a proton gradient across the membrane. The gamma chain is believed to be important in regulating ATPase activity and the flow of protons through the CF(0) complex. In Corynebacterium glutamicum (strain ATCC 13032 / DSM 20300 / JCM 1318 / BCRC 11384 / CCUG 27702 / LMG 3730 / NBRC 12168 / NCIMB 10025 / NRRL B-2784 / 534), this protein is ATP synthase gamma chain.